Consider the following 383-residue polypeptide: Succinyl-diaminopimelate desuccinylase (383 aa).

Residue His72 coordinates Zn(2+). The active site involves Asp74. Zn(2+) is bound at residue Asp105. The active-site Proton acceptor is the Glu137. Zn(2+) is bound by residues Glu138, Glu167, and His352.

This sequence belongs to the peptidase M20A family. DapE subfamily. As to quaternary structure, homodimer. Zn(2+) is required as a cofactor. Requires Co(2+) as cofactor.

The catalysed reaction is N-succinyl-(2S,6S)-2,6-diaminopimelate + H2O = (2S,6S)-2,6-diaminopimelate + succinate. It participates in amino-acid biosynthesis; L-lysine biosynthesis via DAP pathway; LL-2,6-diaminopimelate from (S)-tetrahydrodipicolinate (succinylase route): step 3/3. Its function is as follows. Catalyzes the hydrolysis of N-succinyl-L,L-diaminopimelic acid (SDAP), forming succinate and LL-2,6-diaminopimelate (DAP), an intermediate involved in the bacterial biosynthesis of lysine and meso-diaminopimelic acid, an essential component of bacterial cell walls. This Ehrlichia ruminantium (strain Welgevonden) protein is Succinyl-diaminopimelate desuccinylase.